The sequence spans 336 residues: DNA repair protein RAD51 homolog A (336 aa).

The 30-residue stretch at 45–74 (TVEAVAYAPKKELLNIKGISEAKAEKILAE) folds into the HhH domain. 124–131 (GEFRTGKT) lines the ATP pocket. The Nuclear export signal motif lies at 242 to 257 (LARFLRMLLRLADEFG).

The protein belongs to the RecA family. RAD51 subfamily. Forms linear homooligomers, giving rise to a RAD51 nucleoprotein filament, which is essential for strand-pairing reactions during DNA recombination.

The protein resides in the nucleus. It localises to the cytoplasm. Its subcellular location is the chromosome. Plays an important role in homologous strand exchange, a key step in DNA repair through homologous recombination (HR). Binds to single-stranded DNA in an ATP-dependent manner to form nucleoprotein filaments which are essential for the homology search and strand exchange. Catalyzes the recognition of homology and strand exchange between homologous DNA partners to form a joint molecule between a processed DNA break and the repair template. Recruited to resolve stalled replication forks during replication stress. Also involved in interstrand cross-link repair. In Xenopus laevis (African clawed frog), this protein is DNA repair protein RAD51 homolog A (rad51-a).